The following is a 127-amino-acid chain: Cytochrome c2 (127 aa).

The first 20 residues, 1–20, serve as a signal peptide directing secretion; the sequence is MRKLVFGLFVLAASVAPAAA. Glutamine 21 carries the post-translational modification Pyrrolidone carboxylic acid. Cysteine 33, cysteine 36, histidine 37, and methionine 99 together coordinate heme c.

This sequence belongs to the cytochrome c family. Post-translationally, binds 1 heme c group covalently per subunit.

Functionally, cytochrome c2 is found mainly in purple, non-sulfur, photosynthetic bacteria where it functions as the electron donor to the oxidized bacteriochlorophyll in the photophosphorylation pathway. However, it may also have a role in the respiratory chain and is found in some non-photosynthetic bacteria. The chain is Cytochrome c2 (cycA) from Blastochloris viridis (Rhodopseudomonas viridis).